Consider the following 164-residue polypeptide: ATP synthase subunit b (164 aa).

Residues leucine 10–tyrosine 30 traverse the membrane as a helical segment.

This sequence belongs to the ATPase B chain family. F-type ATPases have 2 components, F(1) - the catalytic core - and F(0) - the membrane proton channel. F(1) has five subunits: alpha(3), beta(3), gamma(1), delta(1), epsilon(1). F(0) has three main subunits: a(1), b(2) and c(10-14). The alpha and beta chains form an alternating ring which encloses part of the gamma chain. F(1) is attached to F(0) by a central stalk formed by the gamma and epsilon chains, while a peripheral stalk is formed by the delta and b chains.

Its subcellular location is the cell membrane. Functionally, f(1)F(0) ATP synthase produces ATP from ADP in the presence of a proton or sodium gradient. F-type ATPases consist of two structural domains, F(1) containing the extramembraneous catalytic core and F(0) containing the membrane proton channel, linked together by a central stalk and a peripheral stalk. During catalysis, ATP synthesis in the catalytic domain of F(1) is coupled via a rotary mechanism of the central stalk subunits to proton translocation. Component of the F(0) channel, it forms part of the peripheral stalk, linking F(1) to F(0). This chain is ATP synthase subunit b, found in Herpetosiphon aurantiacus (strain ATCC 23779 / DSM 785 / 114-95).